The primary structure comprises 536 residues: MDNSSQSKPSSSSSSHSPSPAAITPTQRTTRDSGLCSTIDIPEIQAQCIDNLNSHYLGKGTYGLVEKTRYRKTRQDDFRPAAIKYSSQLHMATLIREAKVMWDLRNHPNIIKIYGLYKSPRNGQGVVMEYMDCGSMADLLYDRTHINYTIDHVASWMFQLSSAVDFFHSNSQVHRDLKLQNMLLSDRYRTMKLCDFGTFTSMHQSMTSNRGTPITMAPEVFRCEQYNMKSDIYSIGIIMWQIIARNHPYRRDLSVPGLLYNVATANLRPQELECNPILSEFYKKCWNDNADIRPTSSECVEYFTLLKDEYPNGSVPLSDSSTNGPAETPPPHAHRPTMLGTSSGSGIGSNNRTPTASKLLNPQQPGQGHRRNRSETFVVQPDLPYPTVPGEAGASRIPKSQSEAKNFRDRAKSEQRQPHRDARPPPPFEHRRDSNDEEKHAVFMNICSNEETRPIDPDTRDEKSLEIFHQHCDNNKQYADAWVIKKEVMRAKHELIAQWPQHDHTVELLERKYYLEQEIARYRDIQDDNYFSTERM.

The span at 1–20 (MDNSSQSKPSSSSSSHSPSP) shows a compositional bias: low complexity. The interval 1–34 (MDNSSQSKPSSSSSSHSPSPAAITPTQRTTRDSG) is disordered. The region spanning 51 to 305 (NLNSHYLGKG…SSECVEYFTL (255 aa)) is the Protein kinase domain. ATP is bound by residues 57–65 (LGKGTYGLV) and Lys-84. Asp-176 (proton acceptor) is an active-site residue. Residues 314-438 (SVPLSDSSTN…EHRRDSNDEE (125 aa)) are disordered. 2 stretches are compositionally biased toward polar residues: residues 315 to 325 (VPLSDSSTNGP) and 350 to 366 (NNRT…QQPG). Residues 405–438 (KNFRDRAKSEQRQPHRDARPPPPFEHRRDSNDEE) show a composition bias toward basic and acidic residues.

The protein belongs to the protein kinase superfamily. STE Ser/Thr protein kinase family. MAP kinase kinase kinase subfamily. In terms of assembly, interacts with, and is activated by, tap-1. The cofactor is Mg(2+). Post-translationally, may be autophosphorylated.

The enzyme catalyses L-seryl-[protein] + ATP = O-phospho-L-seryl-[protein] + ADP + H(+). It catalyses the reaction L-threonyl-[protein] + ATP = O-phospho-L-threonyl-[protein] + ADP + H(+). Functionally, part of the Wnt signaling pathway essential for the specification of the mesodermal cell fate in early embryos. Stimulates the wrm-1/lit-1-dependent phosphorylation of pop-1 and plays a role in the initial nuclear accumulation of wrm-1. This is Mitogen-activated protein kinase kinase kinase mom-4 from Caenorhabditis elegans.